Here is a 323-residue protein sequence, read N- to C-terminus: Annexin A5 (323 aa).

Annexin repeat units follow at residues 17 to 88 (FNDK…ALMV), 89 to 160 (PAHL…SLVQ), 172 to 244 (GQVE…AVVK), and 248 to 319 (SIQG…LLCG).

This sequence belongs to the annexin family.

Calcium/phospholipid-binding protein which promotes membrane fusion and is involved in exocytosis. This chain is Annexin A5, found in Cynops pyrrhogaster (Japanese fire-bellied newt).